We begin with the raw amino-acid sequence, 689 residues long: Ataxin-1-like (689 aa).

Over residues 1–19 (MKPVHERSQECLPPKKRDL) the composition is skewed to basic and acidic residues. 3 disordered regions span residues 1–46 (MKPV…SEWS), 185–223 (ATPP…LDLA), and 242–297 (LHET…GEGQ). The segment at 20–197 (PVTSEDMGRT…PPQAPSPAHS (178 aa)) is interaction with NCOR2 and ATXN1. Residues 20–197 (PVTSEDMGRT…PPQAPSPAHS (178 aa)) form a self-association region. Composition is skewed to polar residues over residues 28–43 (RTTS…SDAS) and 200–219 (KAPS…STQP). Positions 257 to 268 (QESQSALEAAAA) are enriched in low complexity. The segment covering 273 to 285 (RPRERNLVRRESE) has biased composition (basic and acidic residues). The residue at position 284 (S284) is a Phosphoserine. At T330 the chain carries Phosphothreonine. The segment at 357–405 (KEEPSPLNLSHHTPDHQGEGRGSARNPAELAEKSQARGFYPQSHQEPVK) is disordered. S361 is subject to Phosphoserine. An AXH domain is found at 457–588 (PPPITSSHLP…SISLQSLNSN (132 aa)). S615 bears the Phosphoserine mark. A disordered region spans residues 617-647 (ELCDSEGKSQPAGEGSRVVEPSQPESGAQAC).

This sequence belongs to the ATXN1 family. As to quaternary structure, homodimer. Interacts with CIC. Interacts (via AXH domain) with NCOR2. Interacts with ATXN1. Directly interacts with RBPJ; this interaction is disrupted in the presence of Notch intracellular domain. Competes with ATXN1 for RBPJ-binding. Found in a complex with CIC and ATXN1. As to expression, expressed in cerebellum and cerebral cortex.

Its subcellular location is the nucleus. It localises to the cell projection. The protein localises to the dendrite. Functionally, chromatin-binding factor that repress Notch signaling in the absence of Notch intracellular domain by acting as a CBF1 corepressor. Binds to the HEY promoter and might assist, along with NCOR2, RBPJ-mediated repression. Can suppress ATXN1 cytotoxicity in spinocerebellar ataxia type 1 (SCA1). In concert with CIC and ATXN1, involved in brain development. In Homo sapiens (Human), this protein is Ataxin-1-like (ATXN1L).